The following is a 146-amino-acid chain: 3-dehydroquinate dehydratase (146 aa).

Tyr24 functions as the Proton acceptor in the catalytic mechanism. 3 residues coordinate substrate: Asn73, His79, and Asp86. The Proton donor role is filled by His99. Residues 100 to 101 (LS) and Arg110 contribute to the substrate site.

This sequence belongs to the type-II 3-dehydroquinase family. In terms of assembly, homododecamer.

It catalyses the reaction 3-dehydroquinate = 3-dehydroshikimate + H2O. Its pathway is metabolic intermediate biosynthesis; chorismate biosynthesis; chorismate from D-erythrose 4-phosphate and phosphoenolpyruvate: step 3/7. Functionally, catalyzes a trans-dehydration via an enolate intermediate. The chain is 3-dehydroquinate dehydratase from Shewanella baltica (strain OS195).